The chain runs to 310 residues: MTVTVKMLVQKVKLDVVYATDNLLSKEITTSDISRPGLEMTGYFDYYAPERLQLFGMKEWSYLTQMTSHNRYSVLKEMFKKDTPAVVVSRNLAIPKEMVQAAKEEGISLLSSRVSTSRLAGEMSYFLDASLAERTSVHGVLMDIYGMGVLIQGDSGIGKSETGLELVKRGHRLVADDRVDVYAKDEETLWGEPAEILRHLLEIRGVGIIDVMSLYGASAVKDSSQVQLAIYLENFEAGKVFDRLGNGNEEITFSGVRIPRIRIPVKTGRNVSVVIEAAAMNHRAKEMGFDATKTFEDRLTQLITKNEVSQ.

Active-site residues include histidine 138 and lysine 159. 153-160 (GDSGIGKS) contacts ATP. Mg(2+) is bound at residue serine 160. The active-site Proton acceptor; for phosphorylation activity. Proton donor; for dephosphorylation activity is aspartate 177. Residues 201–210 (LEIRGVGIID) are important for the catalytic mechanism of both phosphorylation and dephosphorylation. A Mg(2+)-binding site is contributed by glutamate 202. Arginine 243 is a catalytic residue. Positions 264-269 (PVKTGR) are important for the catalytic mechanism of dephosphorylation.

It belongs to the HPrK/P family. In terms of assembly, homohexamer. Mg(2+) serves as cofactor.

It carries out the reaction [HPr protein]-L-serine + ATP = [HPr protein]-O-phospho-L-serine + ADP + H(+). The enzyme catalyses [HPr protein]-O-phospho-L-serine + phosphate + H(+) = [HPr protein]-L-serine + diphosphate. Functionally, catalyzes the ATP- as well as the pyrophosphate-dependent phosphorylation of a specific serine residue in HPr, a phosphocarrier protein of the phosphoenolpyruvate-dependent sugar phosphotransferase system (PTS). HprK/P also catalyzes the pyrophosphate-producing, inorganic phosphate-dependent dephosphorylation (phosphorolysis) of seryl-phosphorylated HPr (P-Ser-HPr). The two antagonistic activities of HprK/P are regulated by several intracellular metabolites, which change their concentration in response to the absence or presence of rapidly metabolisable carbon sources (glucose, fructose, etc.) in the growth medium. Therefore, by controlling the phosphorylation state of HPr, HPrK/P is a sensor enzyme that plays a major role in the regulation of carbon metabolism and sugar transport: it mediates carbon catabolite repression (CCR), and regulates PTS-catalyzed carbohydrate uptake and inducer exclusion. The polypeptide is HPr kinase/phosphorylase (hprK) (Streptococcus pyogenes serotype M1).